A 426-amino-acid polypeptide reads, in one-letter code: GTPase Obg (426 aa).

The Obg domain maps to 1-158 (MFVDQVSVYV…RNIKVELKLI (158 aa)). Disordered stretches follow at residues 66–86 (GKRGENGMSKTQHGRNADPLV) and 119–146 (GGRGGRGNTRFATPRNPAPDMAENGEPG). The region spanning 159 to 329 (ADVGLVGFPS…LLFAIADKLE (171 aa)) is the OBG-type G domain. GTP contacts are provided by residues 165-172 (GFPSVGKS), 190-194 (FTTLS), 212-215 (DLPG), 282-285 (NKMD), and 310-312 (SAL). Mg(2+) is bound by residues S172 and T192. The 79-residue stretch at 348 to 426 (RYQKEEDPFH…LLEYEFEFIE (79 aa)) folds into the OCT domain.

Belongs to the TRAFAC class OBG-HflX-like GTPase superfamily. OBG GTPase family. As to quaternary structure, monomer. Mg(2+) is required as a cofactor.

The protein localises to the cytoplasm. Functionally, an essential GTPase which binds GTP, GDP and possibly (p)ppGpp with moderate affinity, with high nucleotide exchange rates and a fairly low GTP hydrolysis rate. Plays a role in control of the cell cycle, stress response, ribosome biogenesis and in those bacteria that undergo differentiation, in morphogenesis control. This is GTPase Obg from Oceanobacillus iheyensis (strain DSM 14371 / CIP 107618 / JCM 11309 / KCTC 3954 / HTE831).